Here is a 198-residue protein sequence, read N- to C-terminus: Na(+)-translocating NADH-quinone reductase subunit E (198 aa).

6 helical membrane passes run 11–31 (AVFI…FLAV), 35–55 (VTTA…SVPA), 77–97 (FLNF…LEMI), 109–129 (LGIF…VSFM), 140–160 (IVYG…LASI), and 176–196 (LGIT…FSGV).

This sequence belongs to the NqrDE/RnfAE family. Composed of six subunits; NqrA, NqrB, NqrC, NqrD, NqrE and NqrF.

Its subcellular location is the cell inner membrane. The enzyme catalyses a ubiquinone + n Na(+)(in) + NADH + H(+) = a ubiquinol + n Na(+)(out) + NAD(+). Functionally, NQR complex catalyzes the reduction of ubiquinone-1 to ubiquinol by two successive reactions, coupled with the transport of Na(+) ions from the cytoplasm to the periplasm. NqrA to NqrE are probably involved in the second step, the conversion of ubisemiquinone to ubiquinol. This Photorhabdus laumondii subsp. laumondii (strain DSM 15139 / CIP 105565 / TT01) (Photorhabdus luminescens subsp. laumondii) protein is Na(+)-translocating NADH-quinone reductase subunit E.